The sequence spans 66 residues: Toxin BomPI (66 aa).

The 63-residue stretch at 2 to 64 (RDAYIAQPEN…VPIRIEGKCH (63 aa)) folds into the LCN-type CS-alpha/beta domain. Intrachain disulfides connect Cys-12-Cys-63, Cys-16-Cys-36, Cys-22-Cys-46, and Cys-26-Cys-48.

This sequence belongs to the long (4 C-C) scorpion toxin superfamily. Sodium channel inhibitor family. Alpha subfamily. Expressed by the venom gland.

The protein resides in the secreted. Alpha toxins bind voltage-independently at site-3 of sodium channels (Nav) and inhibit the inactivation of the activated channels, thereby blocking neuronal transmission. This Buthus occitanus mardochei (Moroccan scorpion) protein is Toxin BomPI.